The sequence spans 195 residues: Transcription repressor OFP17 (195 aa).

In terms of domain architecture, OVATE spans 130–190 (EDNAVEDACR…SRFYGELCRD (61 aa)).

It localises to the nucleus. Transcriptional repressor that may regulate multiple aspects of plant growth and development through the regulation of BEL1-LIKE (BLH) and KNOX TALE (KNAT) homeodomain transcription factors. The sequence is that of Transcription repressor OFP17 (OFP17) from Arabidopsis thaliana (Mouse-ear cress).